The primary structure comprises 215 residues: Large ribosomal subunit protein uL3 (215 aa).

The disordered stretch occupies residues 136–155 (GVSISHRSHGSTGQRQDPGK). Gln151 is modified (N5-methylglutamine).

This sequence belongs to the universal ribosomal protein uL3 family. As to quaternary structure, part of the 50S ribosomal subunit. Forms a cluster with proteins L14 and L19. Post-translationally, methylated by PrmB.

One of the primary rRNA binding proteins, it binds directly near the 3'-end of the 23S rRNA, where it nucleates assembly of the 50S subunit. This is Large ribosomal subunit protein uL3 from Rickettsia rickettsii (strain Iowa).